Consider the following 269-residue polypeptide: MPELPEVETSRRGIEPHLVGATILHAHIRNGRLRWPVSDKIYRLSDTPVLSVQRRAKYLLLELPDGWIIIHLGMSGSLRILSEALPAEKHDHVDLVMSNGKILRYTDPRRFGAWLWTKELEGHNVLAHLGPEPLSDEFNGEYLQQKCAKKKTAIKPWLMDNKLVVGVGNIYASESLFAAGIHPDRLASSLSTEECDLLARVIKAVLLRSIEQGGTTLKDFLQSDGKPGYFAQELQVYGRKGEPCRVCGTPIVATKHAQRATFYCRHCQK.

Proline 2 functions as the Schiff-base intermediate with DNA in the catalytic mechanism. Glutamate 3 (proton donor) is an active-site residue. Lysine 57 serves as the catalytic Proton donor; for beta-elimination activity. 3 residues coordinate DNA: histidine 90, arginine 109, and lysine 150. Residues 235 to 269 (QVYGRKGEPCRVCGTPIVATKHAQRATFYCRHCQK) form an FPG-type zinc finger. The active-site Proton donor; for delta-elimination activity is the arginine 259.

It belongs to the FPG family. In terms of assembly, monomer. Zn(2+) is required as a cofactor.

The enzyme catalyses Hydrolysis of DNA containing ring-opened 7-methylguanine residues, releasing 2,6-diamino-4-hydroxy-5-(N-methyl)formamidopyrimidine.. The catalysed reaction is 2'-deoxyribonucleotide-(2'-deoxyribose 5'-phosphate)-2'-deoxyribonucleotide-DNA = a 3'-end 2'-deoxyribonucleotide-(2,3-dehydro-2,3-deoxyribose 5'-phosphate)-DNA + a 5'-end 5'-phospho-2'-deoxyribonucleoside-DNA + H(+). Involved in base excision repair of DNA damaged by oxidation or by mutagenic agents. Acts as a DNA glycosylase that recognizes and removes damaged bases. Has a preference for oxidized purines, such as 7,8-dihydro-8-oxoguanine (8-oxoG). Has AP (apurinic/apyrimidinic) lyase activity and introduces nicks in the DNA strand. Cleaves the DNA backbone by beta-delta elimination to generate a single-strand break at the site of the removed base with both 3'- and 5'-phosphates. This chain is Formamidopyrimidine-DNA glycosylase, found in Salmonella dublin (strain CT_02021853).